A 530-amino-acid polypeptide reads, in one-letter code: Glucose-6-phosphate isomerase (530 aa).

Glu-322 serves as the catalytic Proton donor. Catalysis depends on residues His-351 and Lys-455.

The protein belongs to the GPI family.

The protein localises to the cytoplasm. The catalysed reaction is alpha-D-glucose 6-phosphate = beta-D-fructose 6-phosphate. It functions in the pathway carbohydrate biosynthesis; gluconeogenesis. The protein operates within carbohydrate degradation; glycolysis; D-glyceraldehyde 3-phosphate and glycerone phosphate from D-glucose: step 2/4. Functionally, catalyzes the reversible isomerization of glucose-6-phosphate to fructose-6-phosphate. This chain is Glucose-6-phosphate isomerase, found in Geobacter sp. (strain M21).